The chain runs to 6874 residues: Nesprin-2 (6874 aa).

The actin-binding stretch occupies residues 1–286; that stretch reads MAASPVLPTE…MTYVAQFLKY (286 aa). At 1-6823 the chain is on the cytoplasmic side; that stretch reads MAASPVLPTE…RRSFLSRVIR (6823 aa). Calponin-homology (CH) domains are found at residues 31 to 136 and 183 to 288; these read DTQK…LHFH and WSAK…KYSK. Spectrin repeat units lie at residues 299–380, 381–474, 475–577, and 578–680; these read AKVR…HQVA, AWRA…RINN, VLGK…QYIH, and NTKA…IQDQ. The stretch at 299-6767 forms a coiled coil; the sequence is AKVRDALVWL…PDASLTSFDE (6469 aa). The tract at residues 675-723 is disordered; it reads VKIQDQPPGNSSGTSLSKESAMAAEPGGSRGEDVKAAEKQEVEDEESAG. The segment covering 681-692 has biased composition (polar residues); it reads PPGNSSGTSLSK. The span at 704 to 714 shows a compositional bias: basic and acidic residues; that stretch reads RGEDVKAAEKQ. Spectrin repeat units follow at residues 727 to 834, 835 to 928, 929 to 1030, 1120 to 1211, 1262 to 1322, 1323 to 1409, 1410 to 1514, 1515 to 1626, 1627 to 1728, 1729 to 1820, 1821 to 1928, 1929 to 2026, 2027 to 2122, 2123 to 2233, 2234 to 2350, 2422 to 2503, 2504 to 2610, 2611 to 2707, 2708 to 2821, 2822 to 2923, 2924 to 3027, 3028 to 3133, 3134 to 3239, 3240 to 3343, 3344 to 3456, 3457 to 3563, 3564 to 3669, 3670 to 3767, 3768 to 3870, 3871 to 3976, and 3977 to 4074; these read VNEE…KNLS, DEPL…LRHE, ISLY…KCAS, TQRG…LLNT, DIRD…DALD, ALEG…QSKE, EGPP…ASVT, ESLE…KTEE, YGEN…AGGS, NSYA…TKKN, ALQD…AGEL, NNSF…EEED, KLPA…LANT, YLSH…SVQK, LEGH…LNSI, DERE…TLKK, TKER…KCFQ, QATE…EALE, PLNR…QLEL, KLEE…FLQN, NGSE…GKIK, QLDT…NMLL, ELQP…SLRA, DVLN…AQEA, EEER…QWGG, ELKR…TTRK, NKDL…SSEV, SKSS…ESRT, SQLN…QIME, ALPH…VTQE, and QNEL…KPSA. A disordered region spans residues 2338-2397; that stretch reads SAKQETENGLNSILKSKSSTEKHVKFSLPVEEMPATSEVPKPTRESAAVGESGGARETNT. The segment covering 2344–2354 has biased composition (polar residues); the sequence is ENGLNSILKSK. 4 disordered regions span residues 4062–4152, 4171–4193, 4326–4348, and 4401–4429; these read KQEQ…ATIV, APDSGSTEEGPAPSPRLSQTDEG, FSEDQHPSTLKKPSEPHDVDQPA, and HQENEDANRQSASSSKVPSPGNAASDSTL. Residues 4081–4091 show a composition bias toward basic and acidic residues; sequence VAERDASERKL. S4096 is subject to Phosphoserine. Basic and acidic residues predominate over residues 4110–4122; sequence SSVKSEDGRRRTE. One copy of the Spectrin 36 repeat lies at 4218–4337; that stretch reads RSRPRPADIL…EDQHPSTLKK (120 aa). A compositionally biased stretch (basic and acidic residues) spans 4326–4345; it reads FSEDQHPSTLKKPSEPHDVD. The segment covering 4409-4429 has biased composition (polar residues); sequence RQSASSSKVPSPGNAASDSTL. Spectrin repeat units lie at residues 4507 to 4626, 4627 to 4714, 4715 to 4823, 4824 to 4929, 4930 to 5037, 5038 to 5150, 5151 to 5252, 5253 to 5377, 5378 to 5473, 5474 to 5576, 5577 to 5691, 5692 to 5786, 5787 to 5894, 5895 to 6004, 6005 to 6122, 6123 to 6230, and 6231 to 6342; these read SMTE…RSYQ, NEVK…RARY, LELS…QSML, QKWE…QTLL, KHLL…QEKL, HQLQ…KIQH, LEQL…SQVH, QLRA…KAPH, NAHA…MLLA, KSNE…YSEL, QGNG…QWRF, FTTS…LSLG, EVIS…RVAI, RKQE…VKKL, KETF…EETW, RLWQ…LRYF, and TNQR…PGLD. Positions 5435–5459 are disordered; sequence NSTLSDQLPQPEERSTPGLHSGQRH. S5772 is subject to Phosphoserine. The segment at 6336 to 6473 is disordered; the sequence is SHTPGLDDEK…TEAPVPTDAS (138 aa). Acidic residues predominate over residues 6341 to 6354; that stretch reads LDDEKEASENETDI. Residues S6348, S6371, S6400, S6417, S6418, S6419, and S6448 each carry the phosphoserine modification. Residues 6355–6372 are compositionally biased toward basic and acidic residues; that stretch reads EDPREIQADSWRKRRESE. Spectrin repeat units lie at residues 6450–6534, 6535–6650, and 6651–6767; these read SHSK…KLRL, KQTV…QCQD, and FHQL…SFDE. The segment at 6790-6812 is disordered; that stretch reads EEEEEEEETDSRMPHLDSPGSSQ. The region spanning 6815-6874 is the KASH domain; the sequence is RSFLSRVIRAALPLQLLLLLLLLLACLLPASEDDYSCTQANNFARSFYPMLRYTNGPPPT. The helical; Anchor for type IV membrane protein transmembrane segment at 6824–6844 threads the bilayer; sequence AALPLQLLLLLLLLLACLLPA. Topologically, residues 6845–6874 are perinuclear space; it reads SEDDYSCTQANNFARSFYPMLRYTNGPPPT. The interval 6861–6874 is sufficient for interaction with SUN2; the sequence is FYPMLRYTNGPPPT.

It belongs to the nesprin family. Core component of LINC complexes which are composed of inner nuclear membrane SUN domain-containing proteins coupled to outer nuclear membrane KASH domain-containing nesprins. SUN and KASH domain-containing proteins seem to bind each other promiscuously; however, some LINC complex constituents are tissue- or cell type-specific. At least SUN1/2-containing core LINC complexes are proposed to be hexameric composed of three protomers of each KASH and SUN domain-containing protein. The SUN2:SYNE2/KASH2 complex is a heterohexamer; the homotrimeric cloverleave-like conformation of the SUN domain is a prerequisite for LINC complex formation in which three separate SYNE2/KASH2 peptides bind at the interface of adjacent SUN domains. Interacts with EMD, LMNA, MKS3 and F-actin via its N-terminal domain. Interacts with DCTN1 and DYNC1I1/2; suggesting the association with the dynein-dynactin motor complex. Associates with kinesin motor complexes. Interacts with TMEM67. Interacts (via KASH domain) with TMEM258. Interacts with BROX; this interaction promotes SYN2 ubiquitination and facilitates the relaxation of mechanical stress imposed by compressive actin fibers at the rupture site. In terms of processing, the disulfid bond with SUN2 is required for stability of the SUN2:SYNE2/KASH2 LINC complex under tensile forces though not required for the interaction. As to expression, C-terminal isoforms are highly expressed in the brain, hert and skeletal muscle. Isoform 1 (Nesprin-2 Giant) is most prevalent in the brain, skin, kidney and skeletal muscle.

It localises to the nucleus outer membrane. It is found in the sarcoplasmic reticulum membrane. The protein localises to the cell membrane. Its subcellular location is the cytoplasm. The protein resides in the cytoskeleton. It localises to the mitochondrion. It is found in the nucleus. The protein localises to the nucleoplasm. Its function is as follows. Multi-isomeric modular protein which forms a linking network between organelles and the actin cytoskeleton to maintain the subcellular spatial organization. As a component of the LINC (LInker of Nucleoskeleton and Cytoskeleton) complex involved in the connection between the nuclear lamina and the cytoskeleton. The nucleocytoplasmic interactions established by the LINC complex play an important role in the transmission of mechanical forces across the nuclear envelope and in nuclear movement and positioning. Specifically, SYNE2 and SUN2 assemble in arrays of transmembrane actin-associated nuclear (TAN) lines which are bound to F-actin cables and couple the nucleus to retrograde actin flow during actin-dependent nuclear movement. May be involved in nucleus-centrosome attachment. During interkinetic nuclear migration (INM) at G2 phase and nuclear migration in neural progenitors its LINC complex association with SUN1/2 and probable association with cytoplasmic dynein-dynactin motor complexes functions to pull the nucleus toward the centrosome; SYNE1 and SYNE2 seem to act redundantly in cerebellum, midbrain, brain stem, and other brain regions except cerebral cortex and hippocampus. During INM at G1 phase mediates respective LINC complex association with kinesin to push the nucleus away from the centrosome. Involved in nuclear migration in retinal photoreceptor progenitors. Required for centrosome migration to the apical cell surface during early ciliogenesis. The polypeptide is Nesprin-2 (Mus musculus (Mouse)).